The following is a 280-amino-acid chain: Energy-coupling factor transporter ATP-binding protein EcfA2 (280 aa).

The 243-residue stretch at Ile3–Gly245 folds into the ABC transporter domain. Gly40 to Ser47 is an ATP binding site.

This sequence belongs to the ABC transporter superfamily. Energy-coupling factor EcfA family. Forms a stable energy-coupling factor (ECF) transporter complex composed of 2 membrane-embedded substrate-binding proteins (S component), 2 ATP-binding proteins (A component) and 2 transmembrane proteins (T component).

The protein resides in the cell membrane. In terms of biological role, ATP-binding (A) component of a common energy-coupling factor (ECF) ABC-transporter complex. Unlike classic ABC transporters this ECF transporter provides the energy necessary to transport a number of different substrates. The sequence is that of Energy-coupling factor transporter ATP-binding protein EcfA2 from Streptococcus thermophilus (strain CNRZ 1066).